We begin with the raw amino-acid sequence, 490 residues long: Cytochrome P450 2C55 (490 aa).

C435 is a heme binding site.

Belongs to the cytochrome P450 family. Requires heme as cofactor.

It is found in the endoplasmic reticulum membrane. Its subcellular location is the microsome membrane. The catalysed reaction is an organic molecule + reduced [NADPH--hemoprotein reductase] + O2 = an alcohol + oxidized [NADPH--hemoprotein reductase] + H2O + H(+). Functionally, metabolizes arachidonic acid mainly to 19-hydroxyeicosatetraenoic acid (HETE). This Rattus norvegicus (Rat) protein is Cytochrome P450 2C55 (Cyp2c55).